The chain runs to 592 residues: Medium-chain-fatty-acid--[acyl-carrier-protein] ligase JamA (592 aa).

This sequence belongs to the ATP-dependent AMP-binding enzyme family.

It catalyses the reaction a medium-chain fatty acid + holo-[ACP] + ATP = a medium-chain fatty acyl-[ACP] + AMP + diphosphate. The enzyme catalyses a medium-chain fatty acid + ATP + H(+) = a medium-chain fatty acyl-AMP + diphosphate. It carries out the reaction a medium-chain fatty acyl-AMP + holo-[ACP] = a medium-chain fatty acyl-[ACP] + AMP + H(+). Its function is as follows. Ligase involved in the biosynthesis of jamaicamides, which show sodium channel blocking activity and fish toxicity. Initiates jamaicamide biosynthesis by the activation of the starter unit, 5-hexenoic acid, followed by the loading of the activated 5-hexenoic acid onto the acyl carrier protein JamC. In vitro, can also use 5-hexynoic acid, heptanoic acid, butanoic acid, hexanoic acid and benzoic acid. This Moorena producens (strain JHB) protein is Medium-chain-fatty-acid--[acyl-carrier-protein] ligase JamA.